The sequence spans 295 residues: Methionine aminopeptidase (295 aa).

Histidine 63 contributes to the substrate binding site. Aspartate 83, aspartate 94, and histidine 154 together coordinate a divalent metal cation. Residue histidine 162 coordinates substrate. Residues glutamate 188 and glutamate 281 each coordinate a divalent metal cation.

It belongs to the peptidase M24A family. Methionine aminopeptidase archaeal type 2 subfamily. In terms of assembly, monomer. Requires Co(2+) as cofactor. Zn(2+) is required as a cofactor. It depends on Mn(2+) as a cofactor. Fe(2+) serves as cofactor.

It carries out the reaction Release of N-terminal amino acids, preferentially methionine, from peptides and arylamides.. In terms of biological role, removes the N-terminal methionine from nascent proteins. The N-terminal methionine is often cleaved when the second residue in the primary sequence is small and uncharged (Met-Ala-, Cys, Gly, Pro, Ser, Thr, or Val). This Thermococcus kodakarensis (strain ATCC BAA-918 / JCM 12380 / KOD1) (Pyrococcus kodakaraensis (strain KOD1)) protein is Methionine aminopeptidase.